We begin with the raw amino-acid sequence, 171 residues long: Transcription antitermination protein NusB (171 aa).

It belongs to the NusB family.

Its function is as follows. Involved in transcription antitermination. Required for transcription of ribosomal RNA (rRNA) genes. Binds specifically to the boxA antiterminator sequence of the ribosomal RNA (rrn) operons. The chain is Transcription antitermination protein NusB from Brucella ovis (strain ATCC 25840 / 63/290 / NCTC 10512).